The sequence spans 1128 residues: Zinc finger protein 654 (1128 aa).

Residues 498 to 523 form a disordered region; it reads GFDSLTDQSTGETDPDDVSGVQPKGH. 5 consecutive C2H2-type zinc fingers follow at residues 572-594, 746-771, 787-809, 815-839, and 844-868; these read FACVICGRKFRNRGLMQKHLKNH, FKCPALGCVRIFKRIGFLNKHAMTVH, GKCKFCQRQFEDSQHFIDHLNRH, YFCLHFNCNESFKLPFQLAQHTKSH, and AQCSFPECHELFEDLPLLYEHEAQH. The interval 891-951 is disordered; that stretch reads DSNPNQEKDS…GNERSDDTVS (61 aa). 2 stretches are compositionally biased toward polar residues: residues 903 to 915 and 937 to 951; these read NEKQTISLPVSTS and SLVQNGNERSDDTVS. A phosphoserine mark is found at S1123 and S1127.

The protein belongs to the krueppel C2H2-type zinc-finger protein family.

Its subcellular location is the nucleus. Its function is as follows. May be involved in transcriptional regulation. The protein is Zinc finger protein 654 of Homo sapiens (Human).